The following is a 119-amino-acid chain: uncharacterized protein (119 aa).

The disordered stretch occupies residues 1 to 20 (MPHLAAEAHTWPPHISHSTL). Residues 74–94 (LLFVVHQGHIGTGLIVFIICW) form a helical membrane-spanning segment.

It is found in the membrane. This is an uncharacterized protein from Saccharomyces cerevisiae (strain ATCC 204508 / S288c) (Baker's yeast).